The following is a 236-amino-acid chain: Small ribosomal subunit protein uS2c (236 aa).

This sequence belongs to the universal ribosomal protein uS2 family.

Its subcellular location is the plastid. The protein resides in the chloroplast. In Vitis vinifera (Grape), this protein is Small ribosomal subunit protein uS2c (rps2).